A 402-amino-acid chain; its full sequence is Putative F-box protein At3g20030 (402 aa).

Residues Met-1–Ile-56 form the F-box domain.

The chain is Putative F-box protein At3g20030 from Arabidopsis thaliana (Mouse-ear cress).